Consider the following 156-residue polypeptide: Ribosome maturation factor RimP (156 aa).

Belongs to the RimP family.

It localises to the cytoplasm. Required for maturation of 30S ribosomal subunits. The sequence is that of Ribosome maturation factor RimP from Bacillus thuringiensis (strain Al Hakam).